A 291-amino-acid polypeptide reads, in one-letter code: Probable 2-(5''-triphosphoribosyl)-3'-dephosphocoenzyme-A synthase (291 aa).

Belongs to the CitG/MdcB family.

It catalyses the reaction 3'-dephospho-CoA + ATP = 2'-(5''-triphospho-alpha-D-ribosyl)-3'-dephospho-CoA + adenine. Its function is as follows. Involved in the formation of 2-(5''-phosphoribosyl)-3'-dephosphocoenzyme-A, the prosthetic group of the acyl-carrier protein of the malonate decarboxylase. The chain is Probable 2-(5''-triphosphoribosyl)-3'-dephosphocoenzyme-A synthase from Pseudomonas savastanoi pv. phaseolicola (strain 1448A / Race 6) (Pseudomonas syringae pv. phaseolicola (strain 1448A / Race 6)).